The sequence spans 775 residues: Transposon TX1 uncharacterized 82 kDa protein (775 aa).

A compositionally biased stretch (basic and acidic residues) spans 1–10 (MGGNKKESYK). Disordered regions lie at residues 1–46 (MGGN…ASTS), 256–277 (PKGQIKTTAPVPAPSASNKTSY), and 535–565 (PIQDPADKTAGKDGEGGVVDTEEGSQTTSTV). Over residues 35 to 46 (EPMSKSPIASTS) the composition is skewed to polar residues. Residues 539–549 (PADKTAGKDGE) show a composition bias toward basic and acidic residues.

This chain is Transposon TX1 uncharacterized 82 kDa protein, found in Xenopus laevis (African clawed frog).